A 115-amino-acid chain; its full sequence is Large ribosomal subunit protein bL19 (115 aa).

This sequence belongs to the bacterial ribosomal protein bL19 family.

In terms of biological role, this protein is located at the 30S-50S ribosomal subunit interface and may play a role in the structure and function of the aminoacyl-tRNA binding site. This is Large ribosomal subunit protein bL19 from Parabacteroides distasonis (strain ATCC 8503 / DSM 20701 / CIP 104284 / JCM 5825 / NCTC 11152).